The sequence spans 359 residues: MRITAQPGIMDIALYQGGASQIDGQAEPLKLSSNENPSGCSPAASAKVAETALDLHRYPSTDHSALRMAIGQVHGLDAGRIICGVGSDELLTLLAMAFAGPGDEVLYTEHGFSMYRIFALSAGATPVVAPEKDRTVDIDAIIDRLTPATRLVYIANPANPTGTAIGLEALRRLAQSVPPTSLLVLDGAYAEFFEGYDGGASLVDEFDNVVMTRTFSKLYGLGGLRVGWAYATQEVIDVLNRVRGPFNLSSVALAGAEAAVNDRAFVETCLQENAAQRVRLMGGLNQLGIACDPSHANFVLARFADEAEALAADAHLKSEGILVRIVKGYGFPEALRITVGRADDVTRVLDALARFKGVS.

Residue lysine 217 is modified to N6-(pyridoxal phosphate)lysine.

It belongs to the class-II pyridoxal-phosphate-dependent aminotransferase family. Histidinol-phosphate aminotransferase subfamily. Homodimer. It depends on pyridoxal 5'-phosphate as a cofactor.

The enzyme catalyses L-histidinol phosphate + 2-oxoglutarate = 3-(imidazol-4-yl)-2-oxopropyl phosphate + L-glutamate. Its pathway is amino-acid biosynthesis; L-histidine biosynthesis; L-histidine from 5-phospho-alpha-D-ribose 1-diphosphate: step 7/9. The chain is Histidinol-phosphate aminotransferase from Roseobacter denitrificans (strain ATCC 33942 / OCh 114) (Erythrobacter sp. (strain OCh 114)).